Reading from the N-terminus, the 240-residue chain is MKTNFLVFITFTILISLGFWQLSRLKEKKLFLASMQANLTSPAINLAEIQDGLPYHKVKITGQFLPNKDIYLYGRRSMSSEKDGYYLVTPFKTIEDKVILVARGWFSNRNKNIITQATNDRQHEIIGVTMPSEKTRIYLPANDIKNNVWLTLNLKETSKVLGLDLENFYIIAEGKDISNLDILLPLAINHLAAIRNDHLEYALTWFGLAISLIVIYVIYRRRYMAVDVIPRACSGIQKNN.

Transmembrane regions (helical) follow at residues 7-23 (VFITFTILISLGFWQLS) and 201-219 (YALTWFGLAISLIVIYVIY).

The protein belongs to the SURF1 family.

The protein localises to the cell membrane. The protein is SURF1-like protein of Rickettsia conorii (strain ATCC VR-613 / Malish 7).